A 934-amino-acid polypeptide reads, in one-letter code: Aconitate hydratase A (934 aa).

The segment at Glu-398–Asn-454 is disordered. The span at Leu-404–Glu-420 shows a compositional bias: basic and acidic residues. The span at Ser-427–Ser-445 shows a compositional bias: low complexity. The [4Fe-4S] cluster site is built by Cys-473, Cys-539, and Cys-542.

The protein belongs to the aconitase/IPM isomerase family. Monomer. The cofactor is [4Fe-4S] cluster.

The catalysed reaction is citrate = D-threo-isocitrate. It carries out the reaction (2S,3R)-3-hydroxybutane-1,2,3-tricarboxylate = 2-methyl-cis-aconitate + H2O. The protein operates within carbohydrate metabolism; tricarboxylic acid cycle; isocitrate from oxaloacetate: step 2/2. It functions in the pathway organic acid metabolism; propanoate degradation. Involved in the catabolism of short chain fatty acids (SCFA) via the tricarboxylic acid (TCA)(acetyl degradation route) and probably via the 2-methylcitrate cycle I (propionate degradation route). Catalyzes the reversible isomerization of citrate to isocitrate via cis-aconitate. Could catalyze the hydration of 2-methyl-cis-aconitate to yield (2R,3S)-2-methylisocitrate. The apo form of AcnA functions as a RNA-binding regulatory protein. This is Aconitate hydratase A (acn) from Corynebacterium diphtheriae (strain ATCC 700971 / NCTC 13129 / Biotype gravis).